The sequence spans 630 residues: MLGMYVPDRFSLKSSRVQDGMGLYTARRVRKGEKFGPFAGEKRMPEDLDENMDYRLMWEVRGSKGEVLYILDATNPRHSNWLRFVHEAPSQEQKNLAAIQEGENIFYLAVEDIETDTELLIGYLDSDMEAEEEEQQIMTVIKEGEVENSRRQSTAGRKDRLGCKEDYACPQCESSFTSEDILAEHLQTLHQKPTEEKEFKCKNCGKKFPVKQALQRHVLQCTAKSSLKESSRSFQCSVCNSSFSSASSFEQHQETCRGDARFVCKADSCGKRLKSKDALKRHQENVHTGDPKKKLICSVCNKKCSSASSLQEHRKIHEIFDCQECMKKFISANQLKRHMITHSEKRPYNCEICNKSFKRLDQVGAHKVIHSEDKPYKCKLCGKGFAHRNVYKNHKKTHSEERPFQCEECKALFRTPFSLQRHLLIHNSERTFKCHHCDATFKRKDTLNVHVQVVHERHKKYRCELCNKAFVTPSVLRSHKKTHTGEKEKICPYCGQKFASSGTLRVHIRSHTGERPYQCPYCEKGFSKNDGLKMHIRTHTREKPYKCSECSKAFSQKRGLDEHKRTHTGEKPFQCDVCDLAFSLKKMLIRHKMTHNPNRPLAECQFCHKKFTRNDYLKVHMDNIHGVADS.

The SET domain maps to 8–124 (DRFSLKSSRV…TDTELLIGYL (117 aa)). A C2H2-type 1 zinc finger spans residues 167–190 (YACPQCESSFTSEDILAEHLQTLH). The segment at 199 to 221 (FKCKNCGKKFPVKQALQRHVLQC) adopts a C2H2-type 2; atypical zinc-finger fold. The segment at 234–256 (FQCSVCNSSFSSASSFEQHQETC) adopts a C2H2-type 3; atypical zinc-finger fold. 13 consecutive C2H2-type zinc fingers follow at residues 262 to 287 (FVCK…ENVH), 295 to 317 (LICS…RKIH), 320 to 342 (FDCQ…MITH), 348 to 370 (YNCE…KVIH), 376 to 398 (YKCK…KKTH), 404 to 426 (FQCE…LLIH), 432 to 455 (FKCH…QVVH), 461 to 483 (YRCE…KKTH), 489 to 511 (KICP…IRSH), 517 to 539 (YQCP…IRTH), 545 to 567 (YKCS…KRTH), 573 to 595 (FQCD…KMTH), and 602 to 625 (AECQ…DNIH).

The protein belongs to the class V-like SAM-binding methyltransferase superfamily. As to quaternary structure, interacts with EHMT2/G9A, GFI1 and HDAC1. In terms of tissue distribution, widely expressed with highest levels in colon and ovary. Tends to be silenced in breast, colorectal, gastric and liver cancer tissues.

Its subcellular location is the nucleus. Functionally, sequence-specific DNA-binding transcription factor. Represses transcription at least in part by recruitment of the histone methyltransferase EHMT2/G9A and histone deacetylases such as HDAC1. Regulates hematopoiesis-associated protein-coding and microRNA (miRNA) genes. May regulate the expression of proteins involved in extracellular matrix development and maintenance, including fibrillar collagens, such as COL4A1 and COL11A1, connective tissue components, such as HAPLN1, and molecules regulating cell migration and adhesion, including EDIL3 and TGFB2. May cause G2/M arrest and apoptosis in cancer cells. In Homo sapiens (Human), this protein is PR domain zinc finger protein 5 (PRDM5).